The following is a 284-amino-acid chain: Tropomyosin-1 (284 aa).

Disordered regions lie at residues 1–26 (MDAI…DTCE) and 96–124 (EEDL…DENN). The stretch at 1 to 276 (MDAIKKKMQA…YKSLADEMDS (276 aa)) forms a coiled coil. Residues 12–26 (KLEKDNAMDKADTCE) show a composition bias toward basic and acidic residues. Over residues 107 to 121 (GTAQQKLLEAQQSAD) the composition is skewed to polar residues.

Belongs to the tropomyosin family. As to quaternary structure, homodimer.

Tropomyosin, in association with the troponin complex, plays a central role in the calcium dependent regulation of muscle contraction. The chain is Tropomyosin-1 from Bombyx mori (Silk moth).